The primary structure comprises 336 residues: 7,8-didemethyl-8-hydroxy-5-deazariboflavin synthase (336 aa).

The region spanning 18–249 is the Radical SAM core domain; sequence ITYSPAYTLV…TSIAIQVPPN (232 aa). [4Fe-4S] cluster is bound by residues Cys32, Cys36, and Cys39.

Belongs to the radical SAM superfamily. CofG family. Consists of two subunits, CofG and CofH. The cofactor is [4Fe-4S] cluster.

The enzyme catalyses 5-amino-5-(4-hydroxybenzyl)-6-(D-ribitylimino)-5,6-dihydrouracil + S-adenosyl-L-methionine = 7,8-didemethyl-8-hydroxy-5-deazariboflavin + 5'-deoxyadenosine + L-methionine + NH4(+) + H(+). It functions in the pathway cofactor biosynthesis; coenzyme F0 biosynthesis. Its function is as follows. Catalyzes the radical-mediated synthesis of 7,8-didemethyl-8-hydroxy-5-deazariboflavin from 5-amino-5-(4-hydroxybenzyl)-6-(D-ribitylimino)-5,6-dihydrouracil. The sequence is that of 7,8-didemethyl-8-hydroxy-5-deazariboflavin synthase from Synechococcus elongatus (strain ATCC 33912 / PCC 7942 / FACHB-805) (Anacystis nidulans R2).